Here is a 217-residue protein sequence, read N- to C-terminus: tRNA (guanine-N(7)-)-methyltransferase (217 aa).

S-adenosyl-L-methionine is bound by residues glutamate 43, aspartate 68, asparagine 101, and asparagine 123. Residue lysine 127 coordinates substrate. Residues 129 to 134 (KHNKRR) are interaction with RNA. Residues aspartate 159 and 196-199 (TEYE) each bind substrate.

Belongs to the class I-like SAM-binding methyltransferase superfamily. TrmB family.

It carries out the reaction guanosine(46) in tRNA + S-adenosyl-L-methionine = N(7)-methylguanosine(46) in tRNA + S-adenosyl-L-homocysteine. The protein operates within tRNA modification; N(7)-methylguanine-tRNA biosynthesis. Its function is as follows. Catalyzes the formation of N(7)-methylguanine at position 46 (m7G46) in tRNA. The chain is tRNA (guanine-N(7)-)-methyltransferase from Clostridium botulinum (strain Okra / Type B1).